The following is a 76-amino-acid chain: Large ribosomal subunit protein bL31 (76 aa).

It belongs to the bacterial ribosomal protein bL31 family. Type A subfamily. As to quaternary structure, part of the 50S ribosomal subunit.

In terms of biological role, binds the 23S rRNA. This chain is Large ribosomal subunit protein bL31, found in Gluconacetobacter diazotrophicus (strain ATCC 49037 / DSM 5601 / CCUG 37298 / CIP 103539 / LMG 7603 / PAl5).